We begin with the raw amino-acid sequence, 177 residues long: Tubulin beta chain (177 aa).

The tract at residues 156–177 (YQDATAEEEGEFDEEEGDEEAA) is disordered. Over residues 160–177 (TAEEEGEFDEEEGDEEAA) the composition is skewed to acidic residues.

Belongs to the tubulin family. Dimer of alpha and beta chains. A typical microtubule is a hollow water-filled tube with an outer diameter of 25 nm and an inner diameter of 15 nM. Alpha-beta heterodimers associate head-to-tail to form protofilaments running lengthwise along the microtubule wall with the beta-tubulin subunit facing the microtubule plus end conferring a structural polarity. Microtubules usually have 13 protofilaments but different protofilament numbers can be found in some organisms and specialized cells. Mg(2+) serves as cofactor.

The protein localises to the cytoplasm. The protein resides in the cytoskeleton. In terms of biological role, tubulin is the major constituent of microtubules, a cylinder consisting of laterally associated linear protofilaments composed of alpha- and beta-tubulin heterodimers. Microtubules grow by the addition of GTP-tubulin dimers to the microtubule end, where a stabilizing cap forms. Below the cap, tubulin dimers are in GDP-bound state, owing to GTPase activity of alpha-tubulin. In Lytechinus pictus (Painted sea urchin), this protein is Tubulin beta chain.